The following is a 327-amino-acid chain: Malate dehydrogenase 1 (327 aa).

Residue 12-18 (GAAGQIA) participates in NAD(+) binding. 2 residues coordinate substrate: Arg-93 and Arg-99. NAD(+) contacts are provided by residues Asn-106, Gln-113, and 130 to 132 (VGN). Substrate is bound by residues Asn-132 and Arg-163. The active-site Proton acceptor is His-188.

This sequence belongs to the LDH/MDH superfamily. MDH type 2 family.

It carries out the reaction (S)-malate + NAD(+) = oxaloacetate + NADH + H(+). In terms of biological role, catalyzes the reversible oxidation of malate to oxaloacetate. The protein is Malate dehydrogenase 1 of Burkholderia thailandensis (strain ATCC 700388 / DSM 13276 / CCUG 48851 / CIP 106301 / E264).